The sequence spans 799 residues: Protein ADP-ribosyltransferase PARP3 (799 aa).

Residues 1 to 49 are compositionally biased toward basic and acidic residues; it reads MKVESRSHNVHHAHGEEEKVMTRKQKAESKAHEVEHSPKKAKVEDEKNG. A disordered region spans residues 1–55; it reads MKVESRSHNVHHAHGEEEKVMTRKQKAESKAHEVEHSPKKAKVEDEKNGHTNGKS. The region spanning 39-188 is the PADR1 zinc-binding domain; that stretch reads KKAKVEDEKN…QRDLGLAIKP (150 aa). The 35-residue stretch at 71–105 folds into the SAP domain; that stretch reads NEQLSLEQMKEILEANDLDSSGSDLEITRRCQDLL. The interval 108 to 152 is zinc ribbon; it reads GALEKCMVCNGNMEFDGRRYGCRGFYSEWSSCTFSTREPPRKDEP. Residues cysteine 113, cysteine 116, cysteine 129, and cysteine 139 each coordinate Zn(2+). Residues 140 to 161 form a disordered region; sequence TFSTREPPRKDEPIKLPDSVQN. Basic and acidic residues predominate over residues 145 to 154; that stretch reads EPPRKDEPIK. In terms of domain architecture, BRCT spans 189-261; the sequence is FTGMMISLMG…EPQPLESYDL (73 aa). The 101-residue stretch at 309 to 409 folds into the WGR domain; it reads DGKIFEKDGI…KKFQKKPLKF (101 aa). The PARP alpha-helical domain maps to 436 to 555; it reads HCKLEPMVAN…DITLASHLIG (120 aa). In terms of domain architecture, PARP catalytic spans 564–795; the sequence is DPLSDTYKKL…VKYEEKDAVI (232 aa).

This sequence belongs to the ARTD/PARP family.

The protein resides in the nucleus. It carries out the reaction L-aspartyl-[protein] + NAD(+) = 4-O-(ADP-D-ribosyl)-L-aspartyl-[protein] + nicotinamide. It catalyses the reaction L-glutamyl-[protein] + NAD(+) = 5-O-(ADP-D-ribosyl)-L-glutamyl-[protein] + nicotinamide. In terms of biological role, involved in the base excision repair (BER) pathway, by catalyzing the poly(ADP-ribosyl)ation of a limited number of acceptor proteins involved in chromatin architecture and in DNA metabolism. This modification follows DNA damages and appears as an obligatory step in a detection/signaling pathway leading to the reparation of DNA strand breaks. The chain is Protein ADP-ribosyltransferase PARP3 (PARP3) from Medicago truncatula (Barrel medic).